Reading from the N-terminus, the 343-residue chain is Heat-inducible transcription repressor HrcA (343 aa).

The protein belongs to the HrcA family.

Negative regulator of class I heat shock genes (grpE-dnaK-dnaJ and groELS operons). Prevents heat-shock induction of these operons. This chain is Heat-inducible transcription repressor HrcA, found in Alkaliphilus metalliredigens (strain QYMF).